A 383-amino-acid polypeptide reads, in one-letter code: Outer membrane protein S2 (383 aa).

Residues 1–21 form the signal peptide; sequence MKRKVLALVIPALLAAGAAHA.

It belongs to the Gram-negative porin family. In terms of assembly, homotrimer.

It localises to the cell outer membrane. In terms of biological role, forms pores that allow passive diffusion of small molecules across the outer membrane. This chain is Outer membrane protein S2 (ompS2), found in Salmonella typhi.